The following is a 345-amino-acid chain: Phosphoribosylformylglycinamidine cyclo-ligase (345 aa).

The protein belongs to the AIR synthase family.

The protein localises to the cytoplasm. The enzyme catalyses 2-formamido-N(1)-(5-O-phospho-beta-D-ribosyl)acetamidine + ATP = 5-amino-1-(5-phospho-beta-D-ribosyl)imidazole + ADP + phosphate + H(+). The protein operates within purine metabolism; IMP biosynthesis via de novo pathway; 5-amino-1-(5-phospho-D-ribosyl)imidazole from N(2)-formyl-N(1)-(5-phospho-D-ribosyl)glycinamide: step 2/2. The polypeptide is Phosphoribosylformylglycinamidine cyclo-ligase (Lactobacillus acidophilus (strain ATCC 700396 / NCK56 / N2 / NCFM)).